Consider the following 469-residue polypeptide: Zinc finger CCCH domain-containing protein 30 (469 aa).

The C3H1-type zinc-finger motif lies at 415–443 (VRPMKPCAYFNSPKGCRNGASCTFLHDAS). The segment at 444-469 (APTRKDHQKQKGSKRIKLDNTMGGRN) is disordered. The segment covering 449-458 (DHQKQKGSKR) has biased composition (basic residues).

The protein is Zinc finger CCCH domain-containing protein 30 of Oryza sativa subsp. japonica (Rice).